A 499-amino-acid polypeptide reads, in one-letter code: Cytochrome P450 76T24 (499 aa).

Residues 3-23 (VDILLSLVLAFFGWAAIYFLT) form a helical membrane-spanning segment. N-linked (GlcNAc...) asparagine glycosylation is found at Asn-55, Asn-76, Asn-279, and Asn-284. Cys-442 is a heme binding site.

The protein belongs to the cytochrome P450 family.

The protein localises to the membrane. This chain is Cytochrome P450 76T24, found in Catharanthus roseus (Madagascar periwinkle).